Here is a 597-residue protein sequence, read N- to C-terminus: Membrane protein insertase YidC (597 aa).

The chain crosses the membrane as a helical span at residues 8–28; it reads YFVAIALSVLILIAWQFFYVS. The tract at residues 38–75 is disordered; that stretch reads AEKAQQAQSQPGTQQAAPGQAAPGQALPGGAIPSAAES. Residues 41 to 70 show a composition bias toward low complexity; the sequence is AQQAQSQPGTQQAAPGQAAPGQALPGGAIP. 4 helical membrane passes run 372–392, 446–466, 491–511, and 535–555; these read LFGN…LIFF, WPIL…YVTI, LFGL…WPIV, and FTWM…GLVI.

It belongs to the OXA1/ALB3/YidC family. Type 1 subfamily. In terms of assembly, interacts with the Sec translocase complex via SecD. Specifically interacts with transmembrane segments of nascent integral membrane proteins during membrane integration.

It is found in the cell inner membrane. Required for the insertion and/or proper folding and/or complex formation of integral membrane proteins into the membrane. Involved in integration of membrane proteins that insert both dependently and independently of the Sec translocase complex, as well as at least some lipoproteins. Aids folding of multispanning membrane proteins. In Sinorhizobium medicae (strain WSM419) (Ensifer medicae), this protein is Membrane protein insertase YidC.